The sequence spans 297 residues: Urease accessory protein UreD (297 aa).

The protein belongs to the UreD family. As to quaternary structure, ureD, UreF and UreG form a complex that acts as a GTP-hydrolysis-dependent molecular chaperone, activating the urease apoprotein by helping to assemble the nickel containing metallocenter of UreC. The UreE protein probably delivers the nickel.

It localises to the cytoplasm. In terms of biological role, required for maturation of urease via the functional incorporation of the urease nickel metallocenter. In Anaeromyxobacter sp. (strain Fw109-5), this protein is Urease accessory protein UreD.